We begin with the raw amino-acid sequence, 185 residues long: Ribosome-recycling factor (185 aa).

This sequence belongs to the RRF family.

The protein resides in the cytoplasm. Responsible for the release of ribosomes from messenger RNA at the termination of protein biosynthesis. May increase the efficiency of translation by recycling ribosomes from one round of translation to another. In Shewanella oneidensis (strain ATCC 700550 / JCM 31522 / CIP 106686 / LMG 19005 / NCIMB 14063 / MR-1), this protein is Ribosome-recycling factor.